The chain runs to 356 residues: 16-methoxy-2,3-dihydro-3-hydroxytabersonine synthase (356 aa).

Residues Cys49, His71, Cys102, Cys105, Cys108, Cys116, and Cys162 each coordinate Zn(2+). 187-192 is an NAD(+) binding site; that stretch reads GLGAVG.

This sequence belongs to the zinc-containing alcohol dehydrogenase family. Zn(2+) is required as a cofactor. In terms of tissue distribution, expressed in leaf epidermis.

The catalysed reaction is (3R)-3-hydroxy-16-methoxy-2,3-dihydrotabersonine + A = (3R)-1,2-didehydro-3-hydroxy-16-methoxy-2,3-dihydrotabersonine + AH2. The enzyme catalyses (3R)-3-hydroxy-2,3-dihydrotabersonine + A = (3R)-1,2-didehydro-3-hydroxy-2,3-dihydrotabersonine + AH2. Its pathway is alkaloid biosynthesis; vindoline biosynthesis. Functionally, converts the unstable imine alcohols produced by CYP71D1V2/T3O into 3-hydroxy-16-methoxy-2,3-dihydrotabersonine or 3-hydroxy-2,3-dihydrotabersonine. This chain is 16-methoxy-2,3-dihydro-3-hydroxytabersonine synthase, found in Catharanthus roseus (Madagascar periwinkle).